The following is a 151-amino-acid chain: Transcriptional repressor NrdR (151 aa).

The segment at 3–34 is a zinc-finger region; sequence CPFCGYSESKVVDSRSTEDNMAIRRRRECLEC. An ATP-cone domain is found at 49 to 139; the sequence is ILVIKKDSSR…VYRQFKDINT (91 aa).

Belongs to the NrdR family. Requires Zn(2+) as cofactor.

In terms of biological role, negatively regulates transcription of bacterial ribonucleotide reductase nrd genes and operons by binding to NrdR-boxes. This is Transcriptional repressor NrdR from Clostridium acetobutylicum (strain ATCC 824 / DSM 792 / JCM 1419 / IAM 19013 / LMG 5710 / NBRC 13948 / NRRL B-527 / VKM B-1787 / 2291 / W).